Consider the following 368-residue polypeptide: Serine/threonine-protein kinase CAK1 (368 aa).

Residues 1–368 (MKLDSIDITH…QRILQELEKP (368 aa)) enclose the Protein kinase domain. Catalysis depends on aspartate 156, which acts as the Proton acceptor.

The protein belongs to the protein kinase superfamily. CMGC Ser/Thr protein kinase family. CDC2/CDKX subfamily.

The enzyme catalyses L-seryl-[protein] + ATP = O-phospho-L-seryl-[protein] + ADP + H(+). It catalyses the reaction L-threonyl-[protein] + ATP = O-phospho-L-threonyl-[protein] + ADP + H(+). The protein is Serine/threonine-protein kinase CAK1 (CAK1) of Saccharomyces cerevisiae (strain ATCC 204508 / S288c) (Baker's yeast).